The chain runs to 351 residues: 3-dehydroquinate synthase (351 aa).

NAD(+) is bound by residues 60 to 65 (DGEEYK), 94 to 98 (GVISD), 118 to 119 (TT), lysine 131, lysine 140, and 158 to 161 (FLKT). Zn(2+) is bound by residues glutamate 173, histidine 239, and histidine 256.

It belongs to the sugar phosphate cyclases superfamily. Dehydroquinate synthase family. Co(2+) is required as a cofactor. The cofactor is Zn(2+). It depends on NAD(+) as a cofactor.

It localises to the cytoplasm. The catalysed reaction is 7-phospho-2-dehydro-3-deoxy-D-arabino-heptonate = 3-dehydroquinate + phosphate. It functions in the pathway metabolic intermediate biosynthesis; chorismate biosynthesis; chorismate from D-erythrose 4-phosphate and phosphoenolpyruvate: step 2/7. In terms of biological role, catalyzes the conversion of 3-deoxy-D-arabino-heptulosonate 7-phosphate (DAHP) to dehydroquinate (DHQ). The protein is 3-dehydroquinate synthase of Campylobacter jejuni subsp. doylei (strain ATCC BAA-1458 / RM4099 / 269.97).